Consider the following 250-residue polypeptide: MPEPGSEAIWLWLGTAGMFLGMLYFIARGWGETDSRRQKFYIATILITAIAFVNYLAMALGFGLTIVEFAGEEHPIYWARYSDWLFTTPLLLYDLGLLAGADRNTITSLVSLDVLMIGTGLVATLSPGSGVLSAGAERLVWWGISTAFLLVLLYFLFSSLSGRVADLPSDTRSTFKTLRNLVTVVWLVYPVWWLIGTEGIGLVGIGIETAGFMVIDLTAKVGFGIILLRSHGVLDGAAETTGTGATPADD.

At 1–9 the chain is on the extracellular side; the sequence is MPEPGSEAI. Residues 10 to 27 traverse the membrane as a helical segment; that stretch reads WLWLGTAGMFLGMLYFIA. Residues 28-41 are Cytoplasmic-facing; sequence RGWGETDSRRQKFY. The chain crosses the membrane as a helical span at residues 42-60; it reads IATILITAIAFVNYLAMAL. The Extracellular portion of the chain corresponds to 61–77; it reads GFGLTIVEFAGEEHPIY. A helical membrane pass occupies residues 78–94; sequence WARYSDWLFTTPLLLYD. At 95–105 the chain is on the cytoplasmic side; sequence LGLLAGADRNT. A helical membrane pass occupies residues 106–125; sequence ITSLVSLDVLMIGTGLVATL. Residues 126-138 are Extracellular-facing; sequence SPGSGVLSAGAER. A helical membrane pass occupies residues 139–158; that stretch reads LVWWGISTAFLLVLLYFLFS. The Cytoplasmic segment spans residues 159–176; that stretch reads SLSGRVADLPSDTRSTFK. Residues 177–195 form a helical membrane-spanning segment; that stretch reads TLRNLVTVVWLVYPVWWLI. At 196-207 the chain is on the extracellular side; it reads GTEGIGLVGIGI. Residues 208 to 227 form a helical membrane-spanning segment; that stretch reads ETAGFMVIDLTAKVGFGIIL. An N6-(retinylidene)lysine modification is found at Lys220. Over 228–250 the chain is Cytoplasmic; it reads LRSHGVLDGAAETTGTGATPADD.

The protein belongs to the archaeal/bacterial/fungal opsin family. As to quaternary structure, homotrimer.

Its subcellular location is the cell membrane. In terms of biological role, light-driven proton pump. In Haloarcula argentinensis, this protein is Cruxrhodopsin-1 (cop1).